The sequence spans 458 residues: tRNA modification GTPase MnmE (458 aa).

(6S)-5-formyl-5,6,7,8-tetrahydrofolate is bound by residues R22, E84, and R123. Residues 220–379 enclose the TrmE-type G domain; it reads GIATAIIGRP…LEKAIADLFF (160 aa). N230 contributes to the K(+) binding site. GTP contacts are provided by residues 230-235, 249-255, and 274-277; these read NVGKSS, TDIAGTT, and DTAG. S234 contributes to the Mg(2+) binding site. Residues T249, I251, and T254 each contribute to the K(+) site. Residue T255 participates in Mg(2+) binding. K458 is a binding site for (6S)-5-formyl-5,6,7,8-tetrahydrofolate.

The protein belongs to the TRAFAC class TrmE-Era-EngA-EngB-Septin-like GTPase superfamily. TrmE GTPase family. As to quaternary structure, homodimer. Heterotetramer of two MnmE and two MnmG subunits. Requires K(+) as cofactor.

Its subcellular location is the cytoplasm. Exhibits a very high intrinsic GTPase hydrolysis rate. Involved in the addition of a carboxymethylaminomethyl (cmnm) group at the wobble position (U34) of certain tRNAs, forming tRNA-cmnm(5)s(2)U34. The chain is tRNA modification GTPase MnmE from Bacillus anthracis.